Consider the following 467-residue polypeptide: Cysteine--tRNA ligase (467 aa).

Zn(2+) is bound at residue cysteine 28. The short motif at 30–40 (ITAYDYSHIGH) is the 'HIGH' region element. Zn(2+)-binding residues include cysteine 211, histidine 236, and glutamate 240. A 'KMSKS' region motif is present at residues 268 to 272 (KMSKS). ATP is bound at residue lysine 271.

It belongs to the class-I aminoacyl-tRNA synthetase family. It depends on Zn(2+) as a cofactor.

The protein resides in the cytoplasm. The catalysed reaction is tRNA(Cys) + L-cysteine + ATP = L-cysteinyl-tRNA(Cys) + AMP + diphosphate. The polypeptide is Cysteine--tRNA ligase (cysS) (Archaeoglobus fulgidus (strain ATCC 49558 / DSM 4304 / JCM 9628 / NBRC 100126 / VC-16)).